A 471-amino-acid polypeptide reads, in one-letter code: Protoporphyrinogen oxidase (471 aa).

FAD contacts are provided by residues 16-21, 39-40, Ala47, 61-64, Val251, Trp408, and 446-448; these read GGGISG, ES, GPNS, and VGL.

It belongs to the protoporphyrinogen/coproporphyrinogen oxidase family. Protoporphyrinogen oxidase subfamily. In terms of assembly, monomer. Homodimer. Requires FAD as cofactor.

It localises to the cytoplasm. The protein localises to the cell membrane. The catalysed reaction is protoporphyrinogen IX + 3 O2 = protoporphyrin IX + 3 H2O2. It functions in the pathway porphyrin-containing compound metabolism; protoporphyrin-IX biosynthesis; protoporphyrin-IX from protoporphyrinogen-IX: step 1/1. With respect to regulation, strongly inhibited by acifluorfen. Catalyzes the 6-electron oxidation of protoporphyrinogen-IX to form protoporphyrin-IX. Does not oxidize coproporphyrinogen III. Involved in the classical protoporphyrin-dependent (PPD) heme b biosynthesis. The protein is Protoporphyrinogen oxidase of Myxococcus xanthus.